The primary structure comprises 405 residues: Imidazolonepropionase (405 aa).

Fe(3+) contacts are provided by His-70 and His-72. Residues His-70 and His-72 each contribute to the Zn(2+) site. 4-imidazolone-5-propanoate contacts are provided by Arg-79, Tyr-142, and His-175. Residue Tyr-142 participates in N-formimidoyl-L-glutamate binding. His-240 is a Fe(3+) binding site. Residue His-240 participates in Zn(2+) binding. Residue Gln-243 coordinates 4-imidazolone-5-propanoate. Residue Asp-315 coordinates Fe(3+). A Zn(2+)-binding site is contributed by Asp-315. Positions 317 and 319 each coordinate N-formimidoyl-L-glutamate. Ser-320 lines the 4-imidazolone-5-propanoate pocket.

This sequence belongs to the metallo-dependent hydrolases superfamily. HutI family. It depends on Zn(2+) as a cofactor. Requires Fe(3+) as cofactor.

The protein resides in the cytoplasm. It catalyses the reaction 4-imidazolone-5-propanoate + H2O = N-formimidoyl-L-glutamate. The protein operates within amino-acid degradation; L-histidine degradation into L-glutamate; N-formimidoyl-L-glutamate from L-histidine: step 3/3. Catalyzes the hydrolytic cleavage of the carbon-nitrogen bond in imidazolone-5-propanoate to yield N-formimidoyl-L-glutamate. It is the third step in the universal histidine degradation pathway. This is Imidazolonepropionase from Ruegeria sp. (strain TM1040) (Silicibacter sp.).